The following is a 345-amino-acid chain: Probable aldo-keto reductase 4 (345 aa).

The Proton donor role is filled by Y63. Substrate is bound at residue H130. Position 209–219 (209–219 (SPLGRGFFASG)) interacts with NADP(+).

It belongs to the aldo/keto reductase family.

In Arabidopsis thaliana (Mouse-ear cress), this protein is Probable aldo-keto reductase 4.